A 394-amino-acid chain; its full sequence is NAD(P)H-quinone oxidoreductase subunit H (394 aa).

It belongs to the complex I 49 kDa subunit family. NDH-1 can be composed of about 15 different subunits; different subcomplexes with different compositions have been identified which probably have different functions.

Its subcellular location is the cellular thylakoid membrane. The catalysed reaction is a plastoquinone + NADH + (n+1) H(+)(in) = a plastoquinol + NAD(+) + n H(+)(out). It carries out the reaction a plastoquinone + NADPH + (n+1) H(+)(in) = a plastoquinol + NADP(+) + n H(+)(out). Its function is as follows. NDH-1 shuttles electrons from an unknown electron donor, via FMN and iron-sulfur (Fe-S) centers, to quinones in the respiratory and/or the photosynthetic chain. The immediate electron acceptor for the enzyme in this species is believed to be plastoquinone. Couples the redox reaction to proton translocation, and thus conserves the redox energy in a proton gradient. Cyanobacterial NDH-1 also plays a role in inorganic carbon-concentration. This is NAD(P)H-quinone oxidoreductase subunit H from Nostoc sp. (strain PCC 7120 / SAG 25.82 / UTEX 2576).